The chain runs to 113 residues: UPF0145 protein SynWH7803_1684 (113 aa).

It belongs to the UPF0145 family.

In Synechococcus sp. (strain WH7803), this protein is UPF0145 protein SynWH7803_1684.